The following is a 482-amino-acid chain: tRNA sulfurtransferase (482 aa).

In terms of domain architecture, THUMP spans 61–165 (NQVLTAVTHT…NEKLNLVIAR (105 aa)). ATP-binding positions include 183-184 (LI), K265, G287, and Q296. An intrachain disulfide couples C344 to C456. Residues 404 to 482 (LGSDVVVLDI…GYKNVKVYRP (79 aa)) enclose the Rhodanese domain. The active-site Cysteine persulfide intermediate is the C456.

The protein belongs to the ThiI family.

The protein localises to the cytoplasm. The catalysed reaction is [ThiI sulfur-carrier protein]-S-sulfanyl-L-cysteine + a uridine in tRNA + 2 reduced [2Fe-2S]-[ferredoxin] + ATP + H(+) = [ThiI sulfur-carrier protein]-L-cysteine + a 4-thiouridine in tRNA + 2 oxidized [2Fe-2S]-[ferredoxin] + AMP + diphosphate. It carries out the reaction [ThiS sulfur-carrier protein]-C-terminal Gly-Gly-AMP + S-sulfanyl-L-cysteinyl-[cysteine desulfurase] + AH2 = [ThiS sulfur-carrier protein]-C-terminal-Gly-aminoethanethioate + L-cysteinyl-[cysteine desulfurase] + A + AMP + 2 H(+). It functions in the pathway cofactor biosynthesis; thiamine diphosphate biosynthesis. Catalyzes the ATP-dependent transfer of a sulfur to tRNA to produce 4-thiouridine in position 8 of tRNAs, which functions as a near-UV photosensor. Also catalyzes the transfer of sulfur to the sulfur carrier protein ThiS, forming ThiS-thiocarboxylate. This is a step in the synthesis of thiazole, in the thiamine biosynthesis pathway. The sulfur is donated as persulfide by IscS. The protein is tRNA sulfurtransferase of Aliivibrio salmonicida (strain LFI1238) (Vibrio salmonicida (strain LFI1238)).